A 210-amino-acid polypeptide reads, in one-letter code: Type III pantothenate kinase (210 aa).

Asp-5–His-12 serves as a coordination point for ATP. Substrate-binding positions include Tyr-69 and Gly-73–Arg-76. The Proton acceptor role is filled by Asp-75. Asp-90 lines the K(+) pocket. Ser-93 is a binding site for ATP. Thr-145 serves as a coordination point for substrate.

This sequence belongs to the type III pantothenate kinase family. Homodimer. NH4(+) is required as a cofactor. Requires K(+) as cofactor.

The protein resides in the cytoplasm. The enzyme catalyses (R)-pantothenate + ATP = (R)-4'-phosphopantothenate + ADP + H(+). It participates in cofactor biosynthesis; coenzyme A biosynthesis; CoA from (R)-pantothenate: step 1/5. In terms of biological role, catalyzes the phosphorylation of pantothenate (Pan), the first step in CoA biosynthesis. This chain is Type III pantothenate kinase, found in Wolinella succinogenes (strain ATCC 29543 / DSM 1740 / CCUG 13145 / JCM 31913 / LMG 7466 / NCTC 11488 / FDC 602W) (Vibrio succinogenes).